The following is a 425-amino-acid chain: Lysosome-associated membrane glycoprotein 2 (425 aa).

An N-terminal signal peptide occupies residues 1–27; that stretch reads MAPPRCPAGLALLLLLLGACGFFQSYA. The first lumenal domain stretch occupies residues 28 to 192; that stretch reads VEVDVKDASN…SKKESRCYAD (165 aa). Over 28–389 the chain is Lumenal; it reads VEVDVKDASN…EECFADSDLN (362 aa). N-linked (GlcNAc...) asparagine glycosylation is found at Asn-37, Asn-56, Asn-62, Asn-74, Asn-100, Asn-105, Asn-120, Asn-163, Asn-170, Asn-179, Asn-206, Asn-232, Asn-239, Asn-252, Asn-276, Asn-287, Asn-298, Asn-312, Asn-320, and Asn-331. Cys-40 and Cys-78 are joined by a disulfide. A disulfide bridge connects residues Cys-153 and Cys-189. A hinge region spans residues 193–238; sequence TPTAAPTVLPTVANVTTASTTISPAPTTAPKPAENPVTGNYSLKTG. Positions 239–390 are second lumenal domain; the sequence is NKTCLLATVG…ECFADSDLNF (152 aa). Cys-242 and Cys-274 are disulfide-bonded. Cysteines 345 and 382 form a disulfide. Residues 390–414 form a helical membrane-spanning segment; it reads FLIPVAVGMALGFLIILVFISYIIG. Residues 415 to 425 lie on the Cytoplasmic side of the membrane; that stretch reads RRKSRTGYQSV. The important for binding and subsequent lysosomal degradation of target proteins stretch occupies residues 416–419; sequence RKSR.

Belongs to the LAMP family. As to quaternary structure, monomer. Forms large homooligomers. Extensively N-glycosylated. Contains a minor proportion of O-linked glycans.

The protein resides in the lysosome membrane. Its subcellular location is the endosome membrane. The protein localises to the cell membrane. It is found in the cytoplasmic vesicle. It localises to the autophagosome membrane. Functionally, lysosomal membrane glycoprotein which plays an important role in lysosome biogenesis, lysosomal pH regulation and autophagy. Plays an important role in chaperone-mediated autophagy, a process that mediates lysosomal degradation of proteins in response to various stresses and as part of the normal turnover of proteins with a long biological half-live. In the chaperone-mediated autophagy, acts downstream of chaperones, such as HSPA8/HSC70, which recognize and bind substrate proteins and mediate their recruitment to lysosomes, where target proteins bind LAMP2. Plays a role in lysosomal protein degradation in response to starvation. Required for the fusion of autophagosomes with lysosomes during autophagy. This Gallus gallus (Chicken) protein is Lysosome-associated membrane glycoprotein 2 (LAMP2).